Consider the following 503-residue polypeptide: Aromatase (503 aa).

Transmembrane regions (helical) follow at residues 19 to 39, 51 to 71, and 303 to 323; these read EVMP…LLVW, GYCM…MGIG, and MLIA…FLIA. Substrate contacts are provided by D309 and M374. C437 contacts heme.

This sequence belongs to the cytochrome P450 family. Requires heme as cofactor.

The protein resides in the endoplasmic reticulum membrane. It is found in the microsome membrane. It catalyses the reaction testosterone + 3 reduced [NADPH--hemoprotein reductase] + 3 O2 = 17beta-estradiol + formate + 3 oxidized [NADPH--hemoprotein reductase] + 4 H2O + 4 H(+). The enzyme catalyses androst-4-ene-3,17-dione + 3 reduced [NADPH--hemoprotein reductase] + 3 O2 = estrone + formate + 3 oxidized [NADPH--hemoprotein reductase] + 4 H2O + 4 H(+). The catalysed reaction is androst-4-ene-3,17-dione + reduced [NADPH--hemoprotein reductase] + O2 = 19-hydroxyandrost-4-ene-3,17-dione + oxidized [NADPH--hemoprotein reductase] + H2O + H(+). It carries out the reaction 19-hydroxyandrost-4-ene-3,17-dione + reduced [NADPH--hemoprotein reductase] + O2 = 19-oxo-androst-4-ene-3,17-dione + oxidized [NADPH--hemoprotein reductase] + 2 H2O + H(+). It catalyses the reaction 19-oxo-androst-4-ene-3,17-dione + reduced [NADPH--hemoprotein reductase] + O2 = estrone + formate + oxidized [NADPH--hemoprotein reductase] + H2O + 2 H(+). The enzyme catalyses estrone + reduced [NADPH--hemoprotein reductase] + O2 = 2-hydroxyestrone + oxidized [NADPH--hemoprotein reductase] + H2O + H(+). The catalysed reaction is 17beta-hydroxy-5alpha-androstan-3-one + reduced [NADPH--hemoprotein reductase] + O2 = 17beta,19-dihydroxy-3-oxo-5alpha-androstanone + oxidized [NADPH--hemoprotein reductase] + H2O + H(+). It carries out the reaction 17beta,19-dihydroxy-3-oxo-5alpha-androstanone + reduced [NADPH--hemoprotein reductase] + O2 = 17beta-hydroxy-3,19-dioxo-5alpha-androstanone + oxidized [NADPH--hemoprotein reductase] + 2 H2O + H(+). It catalyses the reaction 17beta-hydroxy-3,19-dioxo-5alpha-androstanone + reduced [NADPH--hemoprotein reductase] + O2 = 17beta-hydroxy-3-oxo-19-nor-5alpha-androst-1-ene + formate + oxidized [NADPH--hemoprotein reductase] + H2O + 2 H(+). It functions in the pathway steroid hormone biosynthesis. Functionally, a cytochrome P450 monooxygenase that catalyzes the conversion of C19 androgens, androst-4-ene-3,17-dione (androstenedione) and testosterone to the C18 estrogens, estrone and estradiol, respectively. Catalyzes three successive oxidations of C19 androgens: two conventional oxidations at C19 yielding 19-hydroxy and 19-oxo/19-aldehyde derivatives, followed by a third oxidative aromatization step that involves C1-beta hydrogen abstraction combined with cleavage of the C10-C19 bond to yield a phenolic A ring and formic acid. Alternatively, the third oxidative reaction yields a 19-norsteroid and formic acid. Converts dihydrotestosterone to delta1,10-dehydro 19-nordihydrotestosterone and may play a role in homeostasis of this potent androgen. Also displays 2-hydroxylase activity toward estrone. Mechanistically, uses molecular oxygen inserting one oxygen atom into a substrate, and reducing the second into a water molecule, with two electrons provided by NADPH via cytochrome P450 reductase (CPR; NADPH-ferrihemoprotein reductase). This chain is Aromatase (CYP19A1), found in Canis lupus familiaris (Dog).